Consider the following 764-residue polypeptide: Nucleolar transcription factor 1 (764 aa).

Position 1 is an N-acetylmethionine (Met1). The tract at residues 1-21 (MNGEADCPTDLEMAAPKGQDR) is disordered. DNA-binding regions (HMG box) lie at residues 112–180 (PKKP…ARFR) and 196–264 (PEKP…RDYI). Thr201 carries the phosphothreonine modification. Phosphoserine is present on residues Ser273, Ser336, Ser364, Ser389, Ser412, Ser433, Ser435, Ser484, Ser495, Ser546, Ser584, and Ser638. Residues 298-362 (TKPPPNSYSL…DYEVELLRFL (65 aa)) constitute a DNA-binding region (HMG box 3). The tract at residues 381-411 (NINKKQATSPASKKPAQEGGKGGSEKPKRPV) is disordered. 3 DNA-binding regions (HMG box) span residues 407–475 (PKRP…GGER), 482–549 (PESP…SEMR), and 568–634 (KKPP…DLWV). The segment at 459–487 (REAALKAQSERKPGGEREERGKLPESPKR) is disordered. A disordered region spans residues 546–576 (SEMRAPPAATNSSKKMKFQGEPKKPPMNGYQ). The interval 648–764 (YISNKRKSMT…SGDSSDSDSN (117 aa)) is disordered. Positions 664-674 (PKSSRTTLQSK) are enriched in polar residues. Over residues 677-745 (SEEDDEEDED…DDDEDEDNES (69 aa)) the composition is skewed to acidic residues. Positions 746-758 (EGSSSSSSSSGDS) are enriched in low complexity.

Homodimer. Part of Pol I pre-initiation complex (PIC), in which Pol I core assembles with RRN3 and promoter-bound UTBF and SL1/TIF-IB complex. Interacts with TOP2A in the context of Pol I complex. Interacts with TBP. Interacts with TAF1A. Interacts with RASL11A. Binds to IRS1 and PIK3CA. Interacts with DHX33. Interacts with PHF6. Interacts with CEBPA (isoform 1 and isoform 4). Interacts with DDX11. Interacts with NOP53. Interacts with ALKBH2. Phosphorylated and activated by PIK3CA.

It is found in the nucleus. Its subcellular location is the nucleolus. Its function is as follows. Recognizes the ribosomal RNA gene promoter and activates transcription mediated by RNA polymerase I (Pol I) through cooperative interactions with the transcription factor SL1/TIF-IB complex. It binds specifically to the upstream control element and can activate Pol I promoter escape. This chain is Nucleolar transcription factor 1 (UBTF), found in Homo sapiens (Human).